Here is a 419-residue protein sequence, read N- to C-terminus: 4-hydroxyphenylpyruvate dioxygenase (419 aa).

VOC domains follow at residues 41–187 and 218–376; these read GYHH…FIQR and AIDH…LFTK. Residues His-221, His-304, and Glu-387 each coordinate Fe cation.

The protein belongs to the 4HPPD family. Fe cation is required as a cofactor.

The enzyme catalyses 3-(4-hydroxyphenyl)pyruvate + O2 = homogentisate + CO2. It participates in amino-acid degradation; L-phenylalanine degradation; acetoacetate and fumarate from L-phenylalanine: step 3/6. The sequence is that of 4-hydroxyphenylpyruvate dioxygenase (HPPD) from Zymoseptoria tritici (Speckled leaf blotch fungus).